The primary structure comprises 385 residues: MAAVETRVCETAGCSSEAKLQCPTCLKLGIQGSYFCSQECFKGSWATHKLLHKKAKDEKAKREVSSWTLEGDINTNPWSGYRYTGKLRPHYPLTPTRPVPSYIQRPDYADHPLGMSESEQALKGTSQIKILSPEDIEGMRVVCRLAREVLDVAAMMVKAGVTTEEIDHAVHLACIARNCYPSPLNYYNFPKSCCTSVNEVICHGIPDRRPLQEGDIVNVDITVYRNGYHGDLNETFYVGEVDEGAKRLVQTTYECLMQAIDAVKPGVRYRELGNIIQKHAQANGFSVVRSYCGHGIHKLFHTAPNVPHYAKNKAVGVMKPGHVFTIEPMICEGGWQDETWPDGWTAVTRDGKRSAQFEHTLLVTDTGCEILTRRLDSIRPHFMSQ.

The segment at 6-59 adopts a C6H2-type zinc-finger fold; it reads TRVCETAGCSSEAKLQCPTCLKLGIQGSYFCSQECFKGSWATHKLLHKKAKDEK. Zn(2+) is bound by residues Cys-9, Cys-14, Cys-22, Cys-25, Cys-36, Cys-40, His-48, and His-52. His-203 contributes to the a protein binding site. Residues Asp-220, Asp-231, and His-294 each contribute to the Zn(2+) site. His-301 serves as a coordination point for a protein. Zn(2+)-binding residues include Glu-327 and Glu-358.

Belongs to the peptidase M24A family. Methionine aminopeptidase type 1 subfamily. In terms of assembly, associates with the 60S ribosomal subunit of the 80S translational complex. Zn(2+) serves as cofactor. Requires Co(2+) as cofactor. The cofactor is Mn(2+). Fe(2+) is required as a cofactor.

The protein resides in the cytoplasm. It carries out the reaction Release of N-terminal amino acids, preferentially methionine, from peptides and arylamides.. Functionally, cotranslationally removes the N-terminal methionine from nascent proteins. The N-terminal methionine is often cleaved when the second residue in the primary sequence is small and uncharged (Met-Ala-, Cys, Gly, Pro, Ser, Thr, or Val). This chain is Methionine aminopeptidase 1 (METAP1), found in Gallus gallus (Chicken).